The following is a 342-amino-acid chain: Autoinducer 2 import system permease protein LsrC (342 aa).

Residues 1–13 (MLKFIQNNREITA) are Periplasmic-facing. The chain crosses the membrane as a helical span at residues 14–34 (LLAVVLLFVLPGFLDRQYLSV). Residues 35–38 (QTLT) are Cytoplasmic-facing. Residues 39-59 (MVYSSAQILILLAMGATLVML) traverse the membrane as a helical segment. At 60-69 (TRNIDVSVGS) the chain is on the periplasmic side. Residues 70–90 (ITGMCAVLLGMLLNAGYSLPV) form a helical membrane-spanning segment. Residues 91–92 (AC) are Cytoplasmic-facing. Residues 93-113 (VATLLLGLLAGFFNGVLVAWL) traverse the membrane as a helical segment. A topological domain (periplasmic) is located at residue Lys114. Residues 115–135 (IPAIVATLGTLGLYRGIMLLW) form a helical membrane-spanning segment. The Cytoplasmic portion of the chain corresponds to 136-154 (TGGKWIEGLPAELKQLSAP). A helical transmembrane segment spans residues 155–175 (LLLGVSAIGWLTIILVAFMAW). The Periplasmic segment spans residues 176 to 212 (LLAKTAFGRSFYATGDNLQGARQLGVRTEAIRIVAFS). Residues 213–233 (LNGCMAALAGIVFASQIGFIP) traverse the membrane as a helical segment. The Cytoplasmic portion of the chain corresponds to 234-251 (NQTGTGLEMKAIAACVLG). The chain crosses the membrane as a helical span at residues 252–272 (GISLLGGSGAIIGAVLGAWFL). Residues 273 to 283 (TQIDSVLVLLR) are Periplasmic-facing. A helical membrane pass occupies residues 284 to 304 (IPAWWNDFIAGLVLLAVLVFD). At 305–342 (GRLRCALERNLRRQKYARFMTPPPSVKPASSGKKREAA) the chain is on the cytoplasmic side.

The protein belongs to the binding-protein-dependent transport system permease family. AraH/RbsC subfamily. As to quaternary structure, the complex is composed of two ATP-binding proteins (LsrA), two transmembrane proteins (LsrC and LsrD) and a solute-binding protein (LsrB).

Its subcellular location is the cell inner membrane. Its function is as follows. Part of the ABC transporter complex LsrABCD involved in autoinducer 2 (AI-2) import. Probably responsible for the translocation of the substrate across the membrane. The sequence is that of Autoinducer 2 import system permease protein LsrC (lsrC) from Escherichia coli (strain K12 / DH10B).